Consider the following 600-residue polypeptide: Spastin (600 aa).

The disordered stretch occupies residues 1–39 (MNSPGGRNDKKKPVTPAAETGPGSPTTPPSTETQVVLAP). At 1–53 (MNSPGGRNDKKKPVTPAAETGPGSPTTPPSTETQVVLAPPSPHKRNLHLFSYP) the chain is on the cytoplasmic side. Positions 15-33 (TPAAETGPGSPTTPPSTET) are enriched in low complexity. An intramembrane region (helical) is located at residues 54-74 (LLAVFSLLRFLAFQLGLLFVW). Residues 75–600 (CCELLSRSVM…WNQDFGDTTV (526 aa)) are Cytoplasmic-facing. An MIT domain is found at 110 to 185 (YHQQAFQYIS…IMAKDRLQLL (76 aa)). The segment at 213-294 (GLLKPEKGAV…KPATPTTAVR (82 aa)) is disordered. A compositionally biased stretch (basic and acidic residues) spans 216-228 (KPEKGAVPKKKDP). Positions 253-291 (PNCTSVPTSARQAGAHTPSNRGATGKNNTRTNKPATPTT) are enriched in polar residues. 366–373 (GPPGNGKT) contacts ATP.

This sequence belongs to the AAA ATPase family. Spastin subfamily. In terms of assembly, homohexamer. The homohexamer is stabilized by ATP-binding. The homohexamer may adopt a ring conformation through which microtubules pass prior to being severed. Interacts with microtubules.

Its subcellular location is the membrane. The protein resides in the cytoplasm. It is found in the cytoskeleton. The protein localises to the microtubule organizing center. It localises to the centrosome. Its subcellular location is the perinuclear region. The protein resides in the nucleus. It catalyses the reaction n ATP + n H2O + a microtubule = n ADP + n phosphate + (n+1) alpha/beta tubulin heterodimers.. Functionally, ATP-dependent microtubule severing protein that specifically recognizes and cuts microtubules that are polyglutamylated. Preferentially recognizes and acts on microtubules decorated with short polyglutamate tails: severing activity increases as the number of glutamates per tubulin rises from one to eight, but decreases beyond this glutamylation threshold. Microtubule severing promotes reorganization of cellular microtubule arrays and the release of microtubules from the centrosome following nucleation. Required for membrane traffic from the endoplasmic reticulum (ER) to the Golgi and for completion of the abscission stage of cytokinesis. Also plays a role in axon growth and the formation of axonal branches. This chain is Spastin, found in Xenopus laevis (African clawed frog).